The chain runs to 378 residues: MLRCFLVAAAAVALAAAAAAPARAIPFTESDLSSEESLRALYERWRSRYTVSRPAASGGVGNDDGEARRRFNVFVENARYIHEANRRGGRPFRLALNKFADMTTDEFRRTYAGSRARHHRSLSGGRGGEGGSFRYGGDDEDNLPPAVDWRERGAVTGIKDQGQCGSCWAFSTVAAVEGVNKIKTGRLVTLSEQELVDCDTGDNQGCDGGLMDYAFQFIKRNGGITTESNYPYRAEQGRCNKAKASSHDVTIDGYEDVPANDESALQKAVANQPVAVAVEASGQDFQFYSEGVFTGECGTDLDHGVAAVGYGITRDGTKYWIVKNSWGEDWGERGYIRMQRGVSSDSNGLCGIAMEASYPVKSGARNAAASNRVVKDEM.

A signal peptide spans 1 to 24 (MLRCFLVAAAAVALAAAAAAPARA). Positions 25 to 141 (IPFTESDLSS…SFRYGGDDED (117 aa)) are cleaved as a propeptide — activation peptide. Intrachain disulfides connect Cys164–Cys206, Cys198–Cys239, and Cys297–Cys350. The active site involves Cys167. Catalysis depends on residues His303 and Asn324.

Belongs to the peptidase C1 family.

The protein localises to the protein storage vacuole. Its function is as follows. Cysteine endopeptidase that digests in vitro both the acidic and basic subunits of glutelin, the major seed storage protein of rice. This Oryza sativa subsp. japonica (Rice) protein is Cysteine endopeptidase RepA.